We begin with the raw amino-acid sequence, 181 residues long: Protoporphyrinogen IX dehydrogenase [quinone] (181 aa).

In terms of domain architecture, Flavodoxin-like spans 3–172; that stretch reads TLILFSTRDG…QVANFAREIA (170 aa). Residues 9 to 13 and 84 to 152 contribute to the FMN site; these read TRDGQ and FYSV…ETDT.

It belongs to the HemG family. FMN is required as a cofactor.

It is found in the cell inner membrane. The enzyme catalyses protoporphyrinogen IX + 3 a menaquinone = protoporphyrin IX + 3 a menaquinol. It carries out the reaction protoporphyrinogen IX + 3 a ubiquinone = protoporphyrin IX + 3 a ubiquinol. It catalyses the reaction protoporphyrinogen IX + 3 a quinone = protoporphyrin IX + 3 a quinol. It functions in the pathway porphyrin-containing compound metabolism; protoporphyrin-IX biosynthesis; protoporphyrin-IX from protoporphyrinogen-IX: step 1/1. In terms of biological role, catalyzes the 6-electron oxidation of protoporphyrinogen IX to form protoporphyrin IX; under anaerobic conditions uses menaquinone as an electron acceptor, under aerobic condition uses ubiquinone as an electron acceptor. This chain is Protoporphyrinogen IX dehydrogenase [quinone], found in Escherichia coli O157:H7.